We begin with the raw amino-acid sequence, 338 residues long: Ketol-acid reductoisomerase (NADP(+)) (338 aa).

Residues 1–181 (MQIFYDKDCD…GGGRTGIIET (181 aa)) enclose the KARI N-terminal Rossmann domain. Residues 24–27 (YGSQ), arginine 47, serine 50, serine 52, and 82–85 (DEFQ) each bind NADP(+). The active site involves histidine 107. Residue glycine 133 coordinates NADP(+). The region spanning 182 to 327 (SFREETETDL…AKLRAMMPWI (146 aa)) is the KARI C-terminal knotted domain. Positions 190, 194, 226, and 230 each coordinate Mg(2+). Serine 251 provides a ligand contact to substrate.

It belongs to the ketol-acid reductoisomerase family. The cofactor is Mg(2+).

The enzyme catalyses (2R)-2,3-dihydroxy-3-methylbutanoate + NADP(+) = (2S)-2-acetolactate + NADPH + H(+). It carries out the reaction (2R,3R)-2,3-dihydroxy-3-methylpentanoate + NADP(+) = (S)-2-ethyl-2-hydroxy-3-oxobutanoate + NADPH + H(+). Its pathway is amino-acid biosynthesis; L-isoleucine biosynthesis; L-isoleucine from 2-oxobutanoate: step 2/4. It participates in amino-acid biosynthesis; L-valine biosynthesis; L-valine from pyruvate: step 2/4. Involved in the biosynthesis of branched-chain amino acids (BCAA). Catalyzes an alkyl-migration followed by a ketol-acid reduction of (S)-2-acetolactate (S2AL) to yield (R)-2,3-dihydroxy-isovalerate. In the isomerase reaction, S2AL is rearranged via a Mg-dependent methyl migration to produce 3-hydroxy-3-methyl-2-ketobutyrate (HMKB). In the reductase reaction, this 2-ketoacid undergoes a metal-dependent reduction by NADPH to yield (R)-2,3-dihydroxy-isovalerate. This is Ketol-acid reductoisomerase (NADP(+)) from Acinetobacter baumannii (strain AB0057).